A 101-amino-acid polypeptide reads, in one-letter code: UPF0751 protein DSY3086 (101 aa).

It belongs to the UPF0751 family.

The polypeptide is UPF0751 protein DSY3086 (Desulfitobacterium hafniense (strain Y51)).